The primary structure comprises 20 residues: Alkaline phosphatase (20 aa).

In terms of tissue distribution, expressed by the venom gland.

The protein localises to the secreted. The catalysed reaction is a phosphate monoester + H2O = an alcohol + phosphate. In terms of biological role, has hemorrhagic activity. The polypeptide is Alkaline phosphatase (Deinagkistrodon acutus (Hundred-pace snake)).